The following is a 206-amino-acid chain: Small ribosomal subunit protein uS5 (206 aa).

Residues 1–23 (MTDTPTKQENQSKTENPPSSNAN) show a composition bias toward polar residues. The interval 1–52 (MTDTPTKQENQSKTENPPSSNANEQRRGNRNNDRKRNRRGDSKNERDSEWQE) is disordered. Over residues 24 to 52 (EQRRGNRNNDRKRNRRGDSKNERDSEWQE) the composition is skewed to basic and acidic residues. Residues 50–113 (WQERVVQIRR…SDGKKHLVRV (64 aa)) enclose the S5 DRBM domain.

This sequence belongs to the universal ribosomal protein uS5 family. As to quaternary structure, part of the 30S ribosomal subunit. Contacts proteins S4 and S8.

With S4 and S12 plays an important role in translational accuracy. Its function is as follows. Located at the back of the 30S subunit body where it stabilizes the conformation of the head with respect to the body. This chain is Small ribosomal subunit protein uS5, found in Prochlorococcus marinus subsp. pastoris (strain CCMP1986 / NIES-2087 / MED4).